The primary structure comprises 177 residues: Large ribosomal subunit protein uL6 (177 aa).

The protein belongs to the universal ribosomal protein uL6 family. Part of the 50S ribosomal subunit.

This protein binds to the 23S rRNA, and is important in its secondary structure. It is located near the subunit interface in the base of the L7/L12 stalk, and near the tRNA binding site of the peptidyltransferase center. This is Large ribosomal subunit protein uL6 from Cereibacter sphaeroides (strain ATCC 17025 / ATH 2.4.3) (Rhodobacter sphaeroides).